The chain runs to 733 residues: Folic acid synthesis protein fol1 (733 aa).

2 DHNA regions span residues 55–167 (VVVE…YAER) and 179–277 (IEFS…QIYR). Tyrosine 281 is modified (phosphotyrosine). Residues 295–454 (NKIAYLSFGS…LPSQGIRLYS (160 aa)) form an HPK region. One can recognise a Pterin-binding domain in the interval 465 to 724 (ALTMGILNVT…DTKEMSKVVG (260 aa)). The DHPS stretch occupies residues 467–733 (TMGILNVTPD…GMANAIRYVP (267 aa)). A Mg(2+)-binding site is contributed by asparagine 472. (7,8-dihydropterin-6-yl)methyl diphosphate is bound by residues threonine 511, aspartate 546, asparagine 565, aspartate 637, lysine 677, and 712 to 714 (RVH).

This sequence in the N-terminal section; belongs to the DHNA family. It in the central section; belongs to the HPPK family. In the C-terminal section; belongs to the DHPS family. It depends on Mg(2+) as a cofactor.

Its subcellular location is the cytoplasm. The catalysed reaction is 7,8-dihydroneopterin = 6-hydroxymethyl-7,8-dihydropterin + glycolaldehyde. It catalyses the reaction 6-hydroxymethyl-7,8-dihydropterin + ATP = (7,8-dihydropterin-6-yl)methyl diphosphate + AMP + H(+). It carries out the reaction (7,8-dihydropterin-6-yl)methyl diphosphate + 4-aminobenzoate = 7,8-dihydropteroate + diphosphate. It functions in the pathway cofactor biosynthesis; tetrahydrofolate biosynthesis; 2-amino-4-hydroxy-6-hydroxymethyl-7,8-dihydropteridine diphosphate from 7,8-dihydroneopterin triphosphate: step 3/4. Its pathway is cofactor biosynthesis; tetrahydrofolate biosynthesis; 2-amino-4-hydroxy-6-hydroxymethyl-7,8-dihydropteridine diphosphate from 7,8-dihydroneopterin triphosphate: step 4/4. It participates in cofactor biosynthesis; tetrahydrofolate biosynthesis; 7,8-dihydrofolate from 2-amino-4-hydroxy-6-hydroxymethyl-7,8-dihydropteridine diphosphate and 4-aminobenzoate: step 1/2. Functionally, catalyzes three sequential steps of tetrahydrofolate biosynthesis. This is Folic acid synthesis protein fol1 (fol1) from Schizosaccharomyces pombe (strain 972 / ATCC 24843) (Fission yeast).